A 397-amino-acid polypeptide reads, in one-letter code: Guanine nucleotide-binding protein G(s) subunit alpha (397 aa).

The disordered stretch occupies residues 1 to 23; it reads MGCLGNSKTEDQRNEEKAQREAN. Residue Gly-2 is the site of N-palmitoyl glycine attachment. Cys-3 is lipidated: S-palmitoyl cysteine. The segment covering 8–23 has biased composition (basic and acidic residues); the sequence is KTEDQRNEEKAQREAN. A G-alpha domain is found at 39-397; the sequence is ATHRLLLLGA…RMHLRQYELL (359 aa). Positions 42-55 are G1 motif; it reads RLLLLGAGESGKST. GTP-binding positions include 47 to 55, 182 to 189, 208 to 212, 277 to 280, and Ala-369; these read GAGESGKST, LLRCRVLT, DVGGQ, and NKQD. 2 residues coordinate Mg(2+): Ser-54 and Thr-189. The G2 motif stretch occupies residues 181–189; sequence DLLRCRVLT. Positions 204 to 213 are G3 motif; that stretch reads FHMFDVGGQR. The segment at 273–280 is G4 motif; the sequence is ILFLNKQD. The interval 367 to 372 is G5 motif; sequence TCAVDT.

It belongs to the G-alpha family. G(s) subfamily. In terms of assembly, heterotrimeric G proteins are composed of 3 units; alpha, beta and gamma. The alpha chain contains the guanine nucleotide binding site. Interacts with CRY1; the interaction may block GPCR-mediated regulation of cAMP concentrations. Interacts with ADCY6 and stimulates its adenylyl cyclase activity. Interacts with ADCY2 and ADCY5. Stimulates the ADCY5 adenylyl cyclase activity. Interaction with SASH1.

Its subcellular location is the cell membrane. In terms of biological role, guanine nucleotide-binding proteins (G proteins) function as transducers in numerous signaling pathways controlled by G protein-coupled receptors (GPCRs). Signaling involves the activation of adenylyl cyclases, resulting in increased levels of the signaling molecule cAMP. GNAS functions downstream of several GPCRs, including beta-adrenergic receptors. Stimulates the Ras signaling pathway via RAPGEF2. The protein is Guanine nucleotide-binding protein G(s) subunit alpha (GNAS) of Sus scrofa (Pig).